The following is a 182-amino-acid chain: Mid1-interacting protein 1 (182 aa).

At Met-1 the chain carries N-acetylmethionine. The segment at 55 to 75 is disordered; that stretch reads VGGSGGCLEERTTPAPSPGSA. Phosphoserine is present on residues Ser-71, Ser-74, and Ser-78.

The protein belongs to the SPOT14 family. Homodimer in the absence of THRSP. Heterodimer with THRSP. The homodimer interacts with ACACA and ACACB. Promotes polymerization of Acetyl-CoA carboxylase to form complexes that contain MID1IP1 and ACACA and/or ACACB. Interaction with THRSP interferes with ACACA binding. In terms of tissue distribution, during embryonic development, expressed mainly in the neuroepithelial midline, urogenital apparatus and digits. Detected in adult white fat, liver, heart, brain and kidney. Expressed at very low levels in lactating mammary gland.

The protein resides in the nucleus. Its subcellular location is the cytoplasm. It localises to the cytoskeleton. Plays a role in the regulation of lipogenesis in liver. Up-regulates ACACA enzyme activity. Required for efficient lipid biosynthesis, including triacylglycerol, diacylglycerol and phospholipid. Involved in stabilization of microtubules. The sequence is that of Mid1-interacting protein 1 (Mid1ip1) from Mus musculus (Mouse).